We begin with the raw amino-acid sequence, 459 residues long: MPEINVMERGRELVVNPLVTCQPFGAMFATLGIRRGLPLVHGSQGCSTFVRYGLNRHFREPAEIAVTSLHEDAAVFGGRSNIINGVKNLVKRFRPDLVGIVTTCSSEIIGDDVDGFMRVAETELREELGDRFQTKLVHISTPSFVENHFRGYGNAIKSFIETLSREDGDCNHKLNIIPGIVNPGDIREIGHMLGLMDITPIILTDTSDPFDSPLRPSKTEQMPFYPPGGTAVPEIEDSSNSMGTLSLTMYGDEALNTLEKRFRVPGEYSMPIGVRNTDDFVRRAARISEKDVSDELLDERGILIDSMADLSSRYLFGRTAAVYGDPDMVAGISRFLCELGITPLHTCTGTDNELFIDRMKTVAAEADERINVMVKSDLRALEERLSEEPVDLMIGNSDGRLIAQDLGIPLVRVGYPVYDRVGYQRVPITGYRGAVNLLNRITNTVLREYYEPQHWKLQQ.

The [8Fe-7S] cluster site is built by cysteine 21, cysteine 46, cysteine 104, and serine 143.

The protein belongs to the NifD/NifK/NifE/NifN family. As to quaternary structure, tetramer of two alpha and two beta chains. Forms complex with the iron protein (nitrogenase component 2). [8Fe-7S] cluster serves as cofactor.

It carries out the reaction N2 + 8 reduced [2Fe-2S]-[ferredoxin] + 16 ATP + 16 H2O = H2 + 8 oxidized [2Fe-2S]-[ferredoxin] + 2 NH4(+) + 16 ADP + 16 phosphate + 6 H(+). This molybdenum-iron protein is part of the nitrogenase complex that catalyzes the key enzymatic reactions in nitrogen fixation. In Methanothermobacter marburgensis (strain ATCC BAA-927 / DSM 2133 / JCM 14651 / NBRC 100331 / OCM 82 / Marburg) (Methanobacterium thermoautotrophicum), this protein is Nitrogenase molybdenum-iron protein beta chain (nifK).